We begin with the raw amino-acid sequence, 232 residues long: tRNA1(Val) (adenine(37)-N6)-methyltransferase (232 aa).

This sequence belongs to the methyltransferase superfamily. tRNA (adenine-N(6)-)-methyltransferase family.

It localises to the cytoplasm. The catalysed reaction is adenosine(37) in tRNA1(Val) + S-adenosyl-L-methionine = N(6)-methyladenosine(37) in tRNA1(Val) + S-adenosyl-L-homocysteine + H(+). In terms of biological role, specifically methylates the adenine in position 37 of tRNA(1)(Val) (anticodon cmo5UAC). The protein is tRNA1(Val) (adenine(37)-N6)-methyltransferase of Pseudoalteromonas translucida (strain TAC 125).